An 861-amino-acid polypeptide reads, in one-letter code: MNPIDTDDLEKHTPMMRQYLTMKAEHHDMLLFYRMGDFYELFYDDAKRASELLGISLTARGKSGGDPIPMAGIPYHAVEGYLAKLVQIGQSVAICEQIGDPATSKGPVERKVVRIVTPGTLTDEALLQERQDNLLAAVYQGKVGFGYATLDVSSGRFVIAELETKESLEAELQRTNPVEILYSEDFGAMELLHHFKGKRRRPEWEFDYDTSIKLLLAQFGTKDLHGFGITDARLSLQAAGCLMQYVKDTQRTALPHINAITRFNQTDTIVLDAATRRNLELTQNLSGGRDNTLAAVLDNTATAMGSRMLQRWIHQPLRDHAQIFARQTAVNELLETTAHESLHDQLKALGDIERIMARLALRTARPRDFARLRQALNLLPQLQQSLAQLSAPHTVKLGQLLGEFPEEQQLLERAIVDNPPMLIRDGGVIREGYNAELDEWRGLSEGATDYLVQLEAREKERTGIATLKVGYNRVHGYYIEVSRLQSQQVPLNYQRRQTLKNMERYITPELKEYEEKVLSSQGKALALEKQLWDELFDLILPKLHELQAFARAAAELDVLSNFAERAETLGYTCPELSSEIGVKIEAGRHPVVERVSQTPFIANPVTLHNQRRMLIVTGPNMGGKSTYMRQVALITLMAHIGCFVPADRAIIGPIDRIFTRIGASDDLASGRSTFMVEMTETANILHNATAQSLVLMDEIGRGTSTYDGLSLAWSAAEYLAQQVGAMTLFATHYFELTQLPELMAGVYNVHLDAIEHEDTIAFMHAVQEGAASKSYGLQVAALAGVPARVIKAAKHKLHQLESRDHQVEGANVNGTRAPIQTLLALPEPVENPAVSKLKDINPDNLTPKQALDLLYELKRLS.

ATP is bound at residue 618–625; the sequence is GPNMGGKS.

It belongs to the DNA mismatch repair MutS family.

In terms of biological role, this protein is involved in the repair of mismatches in DNA. It is possible that it carries out the mismatch recognition step. This protein has a weak ATPase activity. The protein is DNA mismatch repair protein MutS of Shewanella sp. (strain ANA-3).